The following is a 201-amino-acid chain: Large ribosomal subunit protein uL4 (201 aa).

The segment at 45–66 is disordered; the sequence is AQLTRSEVSGGGKKPWRQKGTG.

The protein belongs to the universal ribosomal protein uL4 family. In terms of assembly, part of the 50S ribosomal subunit.

Functionally, one of the primary rRNA binding proteins, this protein initially binds near the 5'-end of the 23S rRNA. It is important during the early stages of 50S assembly. It makes multiple contacts with different domains of the 23S rRNA in the assembled 50S subunit and ribosome. Its function is as follows. Forms part of the polypeptide exit tunnel. The polypeptide is Large ribosomal subunit protein uL4 (Aeromonas salmonicida (strain A449)).